Here is a 144-residue protein sequence, read N- to C-terminus: 3-hydroxyacyl-[acyl-carrier-protein] dehydratase FabZ (144 aa).

Residue histidine 47 is part of the active site.

Belongs to the thioester dehydratase family. FabZ subfamily.

Its subcellular location is the cytoplasm. The enzyme catalyses a (3R)-hydroxyacyl-[ACP] = a (2E)-enoyl-[ACP] + H2O. Its function is as follows. Involved in unsaturated fatty acids biosynthesis. Catalyzes the dehydration of short chain beta-hydroxyacyl-ACPs and long chain saturated and unsaturated beta-hydroxyacyl-ACPs. In Alcanivorax borkumensis (strain ATCC 700651 / DSM 11573 / NCIMB 13689 / SK2), this protein is 3-hydroxyacyl-[acyl-carrier-protein] dehydratase FabZ.